The chain runs to 272 residues: Shikimate dehydrogenase (NADP(+)) (272 aa).

Shikimate-binding positions include serine 14–serine 16 and threonine 61. Lysine 65 functions as the Proton acceptor in the catalytic mechanism. Aspartate 102 lines the shikimate pocket. NADP(+) contacts are provided by residues glycine 127–alanine 131, asparagine 151–lysine 156, and leucine 215. Tyrosine 217 serves as a coordination point for shikimate. Glycine 239 provides a ligand contact to NADP(+).

The protein belongs to the shikimate dehydrogenase family. Homodimer.

It catalyses the reaction shikimate + NADP(+) = 3-dehydroshikimate + NADPH + H(+). The protein operates within metabolic intermediate biosynthesis; chorismate biosynthesis; chorismate from D-erythrose 4-phosphate and phosphoenolpyruvate: step 4/7. Involved in the biosynthesis of the chorismate, which leads to the biosynthesis of aromatic amino acids. Catalyzes the reversible NADPH linked reduction of 3-dehydroshikimate (DHSA) to yield shikimate (SA). This is Shikimate dehydrogenase (NADP(+)) from Coxiella burnetii (strain Dugway 5J108-111).